A 182-amino-acid chain; its full sequence is MKYFEKRFLDVYRPIYLGVIFLGIVLDLVTKFLVILYFQPHRYLEVFGSFFRMTLTFNTGFVFGAFQDNAIPSLIATGVAIVFLIGYRWKNHDLGNPWGWNLVMAGAFGNFLDKFFVKIPGTGFRFGFQPNMGEYIGVVDFLDFDWPDFLLFSRWPAFNVADSCVTIGLTILIFTMKLEEEK.

4 helical membrane-spanning segments follow: residues 15–35, 44–64, 65–85, and 97–117; these read IYLG…FLVI, LEVF…FVFG, AFQD…VFLI, and PWGW…KFFV. Active-site residues include D140 and D162. Residues 155–175 form a helical membrane-spanning segment; the sequence is WPAFNVADSCVTIGLTILIFT.

This sequence belongs to the peptidase A8 family.

It localises to the cell inner membrane. The enzyme catalyses Release of signal peptides from bacterial membrane prolipoproteins. Hydrolyzes -Xaa-Yaa-Zaa-|-(S,diacylglyceryl)Cys-, in which Xaa is hydrophobic (preferably Leu), and Yaa (Ala or Ser) and Zaa (Gly or Ala) have small, neutral side chains.. It functions in the pathway protein modification; lipoprotein biosynthesis (signal peptide cleavage). Its function is as follows. This protein specifically catalyzes the removal of signal peptides from prolipoproteins. This Leptospira interrogans serogroup Icterohaemorrhagiae serovar Lai (strain 56601) protein is Lipoprotein signal peptidase.